The following is a 27-amino-acid chain: Potassium channel toxin alpha-KTx 32.1 (27 aa).

Disulfide bonds link C5–C18 and C12–C25.

Expressed by the venom gland.

The protein localises to the secreted. Blocker of voltage-gated potassium channels. Inhibits voltage-gated potassium channels Kv1.2/KCNA2 (Kd=0.96 nM) and Kv1.3/KCNA3 (Kd=1.3 nM). Does not inhibit Kv1.1/KCNA1, Kv1.5/KCNA5, Kv11.1/KCNH2/ERG1, KCa1.1/KCNMA1, KCa3.1/KCNN4, NaV1.5/SCN5A, NaV1.4/SCN4A or HV1/HVCN1. Strongly inhibits the expression of the activation markers interleukin-2 receptor and CD40 ligand/CD40LG in anti-CD3-activated CD4(+) TEM lymphocytes. This Centruroides margaritatus (Central American bark Scorpion) protein is Potassium channel toxin alpha-KTx 32.1.